Reading from the N-terminus, the 990-residue chain is MKNNLRYGIRKHKLGAASVFLGTMIVVGMGQDKEAATSEQKTTTVEENGNSATDNKVSETQTTTTNVNTIDETQSYSATATEQPSNATQVITEEAPKAVQAPQTAQPANLETVKEEVVKEEEKPQVKETTQSQDNSGDQRQVDLTPKKATQNQAAETQVEVAQPRTVSESKPRVTRSADVAEAKEASDVTEVKGTDVTSKVTVTESSIEGHNNTNKVEPHAGQRAVLKYKLKFEDGLHQGDYFDFTLSNNVNTHGVSTARKVPEIKNGSVVMATGKILEDGKIRYTFTNDVEHKVEVTANLEINLFIDPKTFQSNGEEKVTSSLNGSKTEKNLQIEYKNGVGTYYANVNGSIETFDKEKNKFTHVAYVKPLNQFKLGTVTVSGTVTQGSNPNGEKPTVKIYEVTNDGKDLPQSVYLDASDKNKYKDVTNEMQSKLTVQENGNYTLNLDTLDKSYVIHYSGEYLNGTNEVNFRTQMFGYPEQRYGYYYNSYQLTWDNGLVLYSNKADGNGKNGQIIQNNDFEYKEDTLTETVTGQYDEKQIIETEENQDNTPLDIDYHTAIDGEGGYADGYIETIEETDSSAIDIDYHTAVDSEAGHVGGYTESSEESNPIDFEESTKGIVTGAVSDHTTVEDTKEYTTESNLIELVDELPEEHGQAQGPIEEITENNHHISHSGLGTENGHGNYGVIEEIEENSHVDIKSELGYEGGQNSGNQSFEEDTEEDKPKYEQGGNIVDIDFDSVPQIQGQNNGNQSFEEDTEKDKPKYEQGGNIIDIDFDSVPQIHGFNKHNEIIEEDTNKDKPNYQFGGHNSVDFEEDTLPKVSGQNEGQQTIEEDTTPPTPPTPEVPSEPETPTPPTPEVPSEPETPTPPTPEVPSEPETPTPPTPEVPSEPETPTPPTPEVPAEPGKPVPPAEEEPKKPSKPVEQGKVVTPVIEINEKVKAVAPTKQKQSKKSELPETGGEESTNKGMLFGGLFSILGLALLRRNKKNHKA.

An N-terminal signal peptide occupies residues 1–35 (MKNNLRYGIRKHKLGAASVFLGTMIVVGMGQDKEA). The short motif at 7-18 (YGIRKHKLGAAS) is the YSIRK-G/S signaling motif element. 2 disordered regions span residues 33–61 (KEAA…SETQ) and 96–193 (PKAV…TEVK). The span at 37 to 55 (TSEQKTTTVEENGNSATDN) shows a compositional bias: polar residues. The ligand-binding A region stretch occupies residues 37-511 (TSEQKTTTVE…SNKADGNGKN (475 aa)). Basic and acidic residues-rich tracts occupy residues 112–126 (TVKE…KPQV) and 179–193 (DVAE…TEVK). The interval 194 to 511 (GTDVTSKVTV…SNKADGNGKN (318 aa)) is fibrinogen/elastin/tropoelastin-binding. Residues 512 to 834 (GQIIQNNDFE…EGQQTIEEDT (323 aa)) form a fibronectin-binding region. Residues 545 to 574 (ENQDNTPLDIDYHTAIDGEGGYADGYIETI) form a B-1 repeat. A 2 X approximate tandem repeats region spans residues 545 to 604 (ENQDNTPLDIDYHTAIDGEGGYADGYIETIEETDSSAIDIDYHTAVDSEAGHVGGYTESS). The B-2 repeat unit spans residues 575-604 (EETDSSAIDIDYHTAVDSEAGHVGGYTESS). Residues 702-969 (LGYEGGQNSG…EESTNKGMLF (268 aa)) are disordered. The D-1 repeat unit spans residues 707–744 (GQNSGNQSFEEDTEEDKPKYEQGGNIVDIDFDSVPQIQ). Positions 707 to 850 (GQNSGNQSFE…TPEVPSEPET (144 aa)) are 4 X approximate tandem repeats. The segment covering 741–752 (PQIQGQNNGNQS) has biased composition (polar residues). One copy of the D-2 repeat lies at 745-782 (GQNNGNQSFEEDTEKDKPKYEQGGNIIDIDFDSVPQIH). The stretch at 783–821 (GFNKHNEIIEEDTNKDKPNYQFGGHNSVDFEEDTLPKVS) is one D-3 repeat. Residues 786-800 (KHNEIIEEDTNKDKP) show a composition bias toward basic and acidic residues. One copy of the D-4; truncated repeat lies at 822 to 850 (GQNEGQQTIEEDTTPPTPPTPEVPSEPET). The segment covering 836–910 (PPTPPTPEVP…PAEPGKPVPP (75 aa)) has biased composition (pro residues). WR repeat units follow at residues 851 to 864 (PTPP…EPET), 865 to 878 (PTPP…EPET), 879 to 892 (PTPP…EPET), 893 to 906 (PTPP…EPGK), and 907 to 920 (PVPP…KPSK). The segment at 851 to 920 (PTPPTPEVPS…AEEEPKKPSK (70 aa)) is 5 X tandem repeats, Pro-rich (WR). The LPXTG sorting signal signature appears at 954-958 (LPETG). Position 957 is a pentaglycyl murein peptidoglycan amidated threonine (Thr-957). Residues 958–990 (GGEESTNKGMLFGGLFSILGLALLRRNKKNHKA) constitute a propeptide, removed by sortase.

Its subcellular location is the secreted. It localises to the cell wall. Its function is as follows. Promotes bacterial attachment to multiple substrates, such as fibronectin (Fn), fibrinogen (Fg), elastin peptides and tropoelastin. This confers to S.aureus the ability to invade endothelial cells. Promotes adherence to and aggregation of activated platelets. The chain is Fibronectin-binding protein A (fnbA) from Staphylococcus aureus (strain bovine RF122 / ET3-1).